The sequence spans 235 residues: Orotidine 5'-phosphate decarboxylase (235 aa).

Residues D12, K34, D61–T70, T116, R177, Q186, G206, and R207 contribute to the substrate site. Catalysis depends on K63, which acts as the Proton donor.

This sequence belongs to the OMP decarboxylase family. Type 1 subfamily. Homodimer.

The enzyme catalyses orotidine 5'-phosphate + H(+) = UMP + CO2. Its pathway is pyrimidine metabolism; UMP biosynthesis via de novo pathway; UMP from orotate: step 2/2. Catalyzes the decarboxylation of orotidine 5'-monophosphate (OMP) to uridine 5'-monophosphate (UMP). In Rhizobium johnstonii (strain DSM 114642 / LMG 32736 / 3841) (Rhizobium leguminosarum bv. viciae), this protein is Orotidine 5'-phosphate decarboxylase.